A 447-amino-acid polypeptide reads, in one-letter code: GTPase Era, mitochondrial (447 aa).

Residues 1-18 (MTLRSCETFLRRSLRFST) constitute a mitochondrion transit peptide. The Era-type G domain maps to 109–340 (KSLKVAIVGS…RYLFVAAKPC (232 aa)). The G1 stretch occupies residues 117 to 124 (GSPNAGKS). GTP is bound at residue 117-124 (GSPNAGKS). Residues 143 to 147 (HTTRS) are G2. The tract at residues 164-167 (DTPG) is G3. GTP-binding positions include 164–168 (DTPGL) and 233–236 (NKVD). The tract at residues 233 to 236 (NKVD) is G4. A G5 region spans residues 318–320 (LSS). Residues 370-447 (LPKEVPYTMT…RLKISVKLRK (78 aa)) enclose the KH type-2 domain.

The protein belongs to the TRAFAC class TrmE-Era-EngA-EngB-Septin-like GTPase superfamily. Era GTPase family.

The protein localises to the mitochondrion matrix. It is found in the mitochondrion inner membrane. Functionally, probable GTPase that plays a role in the mitochondrial ribosomal small subunit assembly. Specifically binds the 12S mitochondrial rRNA (12S mt-rRNA) to a 33 nucleotide section delineating the 3' terminal stem-loop region. May act as a chaperone that protects the 12S mt-rRNA on the 28S mitoribosomal subunit during ribosomal small subunit assembly. The polypeptide is GTPase Era, mitochondrial (eral1) (Danio rerio (Zebrafish)).